The chain runs to 128 residues: Large ribosomal subunit protein bL19 (128 aa).

It belongs to the bacterial ribosomal protein bL19 family.

Functionally, this protein is located at the 30S-50S ribosomal subunit interface and may play a role in the structure and function of the aminoacyl-tRNA binding site. This chain is Large ribosomal subunit protein bL19, found in Bradyrhizobium sp. (strain ORS 278).